Reading from the N-terminus, the 615-residue chain is Proteasome-associated ATPase (615 aa).

The segment at 1-36 (MSESERPEAGDGTDALGASPDTPLSSEDAAELEQLR) is disordered. Residues 25 to 102 (SSEDAAELEQ…LREEVDRLGQ (78 aa)) adopt a coiled-coil conformation. 302-307 (GCGKTL) contacts ATP. Residues 614 to 615 (YL) form a docks into pockets in the proteasome alpha-ring region.

This sequence belongs to the AAA ATPase family. As to quaternary structure, homohexamer. Assembles into a hexameric ring structure that caps the 20S proteasome core. Strongly interacts with the prokaryotic ubiquitin-like protein Pup through a hydrophobic interface; the interacting region of ARC lies in its N-terminal coiled-coil domain. There is one Pup binding site per ARC hexamer ring. Upon ATP-binding, the C-terminus of ARC interacts with the alpha-rings of the proteasome core, possibly by binding to the intersubunit pockets.

It functions in the pathway protein degradation; proteasomal Pup-dependent pathway. Functionally, ATPase which is responsible for recognizing, binding, unfolding and translocation of pupylated proteins into the bacterial 20S proteasome core particle. May be essential for opening the gate of the 20S proteasome via an interaction with its C-terminus, thereby allowing substrate entry and access to the site of proteolysis. Thus, the C-termini of the proteasomal ATPase may function like a 'key in a lock' to induce gate opening and therefore regulate proteolysis. This chain is Proteasome-associated ATPase, found in Mycolicibacterium gilvum (strain PYR-GCK) (Mycobacterium gilvum (strain PYR-GCK)).